Here is a 391-residue protein sequence, read N- to C-terminus: Coiled-coil domain-containing protein 85C (391 aa).

2 coiled-coil regions span residues 19–86 (EELL…RELC) and 116–146 (KEVG…KEII). Disordered regions lie at residues 155-238 (GAGS…LNDS) and 278-303 (PYHS…TRVT). Residues 157-175 (GSRSSIDSQNSLTNLNGSS) are compositionally biased toward polar residues. The segment covering 182–194 (DGSSTSSTGSAGS) has biased composition (low complexity). The span at 280–303 (HSESQLSPLPQYQEPLQNGSTRVT) shows a compositional bias: polar residues.

The protein belongs to the CCDC85 family.

It localises to the cell junction. Its subcellular location is the tight junction. The protein resides in the adherens junction. Functionally, may play a role in cell-cell adhesion and epithelium development through its interaction with proteins of the beta-catenin family. May play an important role in cortical development, especially in the maintenance of radial glia. In Xenopus tropicalis (Western clawed frog), this protein is Coiled-coil domain-containing protein 85C (ccdc85c).